The primary structure comprises 348 residues: Heat-inducible transcription repressor HrcA (348 aa).

The protein belongs to the HrcA family.

Functionally, negative regulator of class I heat shock genes (grpE-dnaK-dnaJ and groELS operons). Prevents heat-shock induction of these operons. This Thermomicrobium roseum (strain ATCC 27502 / DSM 5159 / P-2) protein is Heat-inducible transcription repressor HrcA.